A 242-amino-acid chain; its full sequence is Adapter protein MecA (242 aa).

The protein belongs to the MecA family. Homodimer.

Its function is as follows. Enables the recognition and targeting of unfolded and aggregated proteins to the ClpC protease or to other proteins involved in proteolysis. The chain is Adapter protein MecA from Streptococcus gordonii (strain Challis / ATCC 35105 / BCRC 15272 / CH1 / DL1 / V288).